The following is a 215-amino-acid chain: UPF0126 membrane protein DR_2368 (215 aa).

6 helical membrane-spanning segments follow: residues 15–35 (LHWLDLIGVLAFAMSGALLGV), 39–59 (FDLFGVLVLGAVTAVGGGAIR), 75–95 (TYLWTALLGALLAFAFGERLA), 101–121 (LSLFDSAGLALFATSGALGAI), 123–143 (IGLGPLGVVFAGMLSGVGGGI), and 162–182 (LYATAAAAGAGAVWLLAPHFT).

It belongs to the UPF0126 family.

It localises to the cell membrane. The polypeptide is UPF0126 membrane protein DR_2368 (Deinococcus radiodurans (strain ATCC 13939 / DSM 20539 / JCM 16871 / CCUG 27074 / LMG 4051 / NBRC 15346 / NCIMB 9279 / VKM B-1422 / R1)).